The primary structure comprises 38 residues: Alpha-2-macroglobulin homolog (38 aa).

A cross-link (isoglutamyl cysteine thioester (Cys-Gln)) is located at residues 27–30 (CGEQ).

Belongs to the protease inhibitor I39 (alpha-2-macroglobulin) family. Homodimer; disulfide-linked. As to expression, hemolymph.

It localises to the secreted. Functionally, is able to inhibit all four classes of proteinases by a unique 'trapping' mechanism. This protein has a peptide stretch, called the 'bait region' which contains specific cleavage sites for different proteinases. When a proteinase cleaves the bait region, a conformational change is induced in the protein which traps the proteinase. The entrapped enzyme remains active against low molecular weight substrates (activity against high molecular weight substrates is greatly reduced). Following cleavage in the bait region a thioester bond is hydrolyzed and mediates the covalent binding of the protein to the proteinase. In Homarus americanus (American lobster), this protein is Alpha-2-macroglobulin homolog.